Consider the following 247-residue polypeptide: Cell division protein ZapD (247 aa).

It belongs to the ZapD family. As to quaternary structure, interacts with FtsZ.

The protein resides in the cytoplasm. Its function is as follows. Cell division factor that enhances FtsZ-ring assembly. Directly interacts with FtsZ and promotes bundling of FtsZ protofilaments, with a reduction in FtsZ GTPase activity. The sequence is that of Cell division protein ZapD from Salmonella arizonae (strain ATCC BAA-731 / CDC346-86 / RSK2980).